Here is a 68-residue protein sequence, read N- to C-terminus: UPF0435 protein SA1696 (68 aa).

It belongs to the UPF0435 family.

The chain is UPF0435 protein SA1696 from Staphylococcus aureus (strain N315).